Reading from the N-terminus, the 225-residue chain is Peptidyl-tRNA hydrolase (225 aa).

Residue Tyr-14 coordinates tRNA. His-19 (proton acceptor) is an active-site residue. Positions 64, 66, and 112 each coordinate tRNA. The tract at residues 182–225 (AVALRMQPPKPEKPKPAAKAPEAQAPEAAPDERSALQKLADRFR) is disordered. Residues 198 to 209 (AAKAPEAQAPEA) show a composition bias toward low complexity. Positions 211–225 (PDERSALQKLADRFR) are enriched in basic and acidic residues.

It belongs to the PTH family. Monomer.

The protein localises to the cytoplasm. The catalysed reaction is an N-acyl-L-alpha-aminoacyl-tRNA + H2O = an N-acyl-L-amino acid + a tRNA + H(+). Its function is as follows. Hydrolyzes ribosome-free peptidyl-tRNAs (with 1 or more amino acids incorporated), which drop off the ribosome during protein synthesis, or as a result of ribosome stalling. Functionally, catalyzes the release of premature peptidyl moieties from peptidyl-tRNA molecules trapped in stalled 50S ribosomal subunits, and thus maintains levels of free tRNAs and 50S ribosomes. The sequence is that of Peptidyl-tRNA hydrolase from Cereibacter sphaeroides (strain ATCC 17029 / ATH 2.4.9) (Rhodobacter sphaeroides).